The chain runs to 29 residues: Potassium-transporting ATPase KdpF subunit (29 aa).

The chain crosses the membrane as a helical span at residues 2 to 22; sequence LIGEAVLAVVTVAVVAYLTYV.

It belongs to the KdpF family. In terms of assembly, the system is composed of three essential subunits: KdpA, KdpB and KdpC. The complex also contains KdpF, a small non-essential subunit.

It localises to the cell membrane. Its function is as follows. Part of the high-affinity ATP-driven potassium transport (or Kdp) system, which catalyzes the hydrolysis of ATP coupled with the electrogenic transport of potassium into the cytoplasm. This subunit may be involved in stabilization of the complex. The Kdp system is essential for growth under K(+) limitation, and for survival under desiccation and salt crystal inclusion. This is Potassium-transporting ATPase KdpF subunit from Halobacterium salinarum (strain ATCC 29341 / DSM 671 / R1).